The chain runs to 208 residues: Ubiquitin-conjugating enzyme E2 S (208 aa).

The UBC core domain occupies 14–160; it reads QTIRQVMREL…ARMMTEIHAQ (147 aa). The active-site Glycyl thioester intermediate is the Cys-98. Positions 159 to 208 are disordered; it reads AQPAKCASTTSDAKDDDGPSTKKHAGLDKKLQDKKKEKLLKEKKRMLKRL. Residues 170–198 show a composition bias toward basic and acidic residues; it reads DAKDDDGPSTKKHAGLDKKLQDKKKEKLL. Positions 199–208 are enriched in basic residues; it reads KEKKRMLKRL.

The protein belongs to the ubiquitin-conjugating enzyme family.

It catalyses the reaction S-ubiquitinyl-[E1 ubiquitin-activating enzyme]-L-cysteine + [E2 ubiquitin-conjugating enzyme]-L-cysteine = [E1 ubiquitin-activating enzyme]-L-cysteine + S-ubiquitinyl-[E2 ubiquitin-conjugating enzyme]-L-cysteine.. The protein operates within protein modification; protein ubiquitination. In terms of biological role, catalyzes the covalent attachment of ubiquitin to other proteins. Acts as an essential factor of the anaphase promoting complex/cyclosome (APC/C), a cell cycle-regulated ubiquitin ligase that controls progression through mitosis. Acts by specifically elongating polyubiquitin chains initiated by the E2 enzyme vih/UbcH10 on APC/C substrates, enhancing the degradation of APC/C substrates by the proteasome and promoting mitotic exit. This Drosophila willistoni (Fruit fly) protein is Ubiquitin-conjugating enzyme E2 S.